The primary structure comprises 266 residues: Undecaprenyl-diphosphatase (266 aa).

Transmembrane regions (helical) follow at residues 8–28 (VLAL…AHLI), 39–59 (QGLA…VIYF), 87–107 (WAVG…HDII), 113–133 (SAQV…FADV), 188–208 (SFLL…LGLV), 219–239 (MIVL…HYFL), and 246–266 (TMLP…FLFW).

The protein belongs to the UppP family.

Its subcellular location is the cell inner membrane. It catalyses the reaction di-trans,octa-cis-undecaprenyl diphosphate + H2O = di-trans,octa-cis-undecaprenyl phosphate + phosphate + H(+). Functionally, catalyzes the dephosphorylation of undecaprenyl diphosphate (UPP). Confers resistance to bacitracin. This Thioalkalivibrio sulfidiphilus (strain HL-EbGR7) protein is Undecaprenyl-diphosphatase.